Consider the following 459-residue polypeptide: Nuclear distribution protein nudF 1 (459 aa).

In terms of domain architecture, LisH spans 9-41 (QAEELHKSIIAYLSANNLSNAASALRGELGLSE). Residues 61 to 88 (TSIVRLQKKIMDLEARCGALQTELNNAT) are a coiled coil. WD repeat units follow at residues 114-155 (SHRN…TTLK), 157-197 (HTRA…KNIR), 201-240 (GHEH…CVKT), 243-282 (GHSG…NPEA), 288-349 (GHDH…LMTL), 351-390 (GHDN…KCVK), 395-440 (AHGR…PQVQ), and 442-459 (RCVV…IFAN).

Belongs to the WD repeat LIS1/nudF family. Self-associates. Interacts with nudE and dynein.

The protein localises to the cytoplasm. It is found in the cytoskeleton. Its subcellular location is the spindle pole. Functionally, positively regulates the activity of the minus-end directed microtubule motor protein dynein. May enhance dynein-mediated microtubule sliding by targeting dynein to the microtubule plus end. Required for nuclear migration during vegetative growth as well as development. Required for retrograde early endosome (EE) transport from the hyphal tip. Required for localization of dynein to the mitotic spindle poles. Recruits additional proteins to the dynein complex at SPBs. The polypeptide is Nuclear distribution protein nudF 1 (Talaromyces marneffei (strain ATCC 18224 / CBS 334.59 / QM 7333) (Penicillium marneffei)).